Here is a 246-residue protein sequence, read N- to C-terminus: 1-(5-phosphoribosyl)-5-[(5-phosphoribosylamino)methylideneamino] imidazole-4-carboxamide isomerase (246 aa).

D8 acts as the Proton acceptor in catalysis. The active-site Proton donor is the D130.

The protein belongs to the HisA/HisF family.

It localises to the cytoplasm. It carries out the reaction 1-(5-phospho-beta-D-ribosyl)-5-[(5-phospho-beta-D-ribosylamino)methylideneamino]imidazole-4-carboxamide = 5-[(5-phospho-1-deoxy-D-ribulos-1-ylimino)methylamino]-1-(5-phospho-beta-D-ribosyl)imidazole-4-carboxamide. It functions in the pathway amino-acid biosynthesis; L-histidine biosynthesis; L-histidine from 5-phospho-alpha-D-ribose 1-diphosphate: step 4/9. The chain is 1-(5-phosphoribosyl)-5-[(5-phosphoribosylamino)methylideneamino] imidazole-4-carboxamide isomerase from Halorhodospira halophila (strain DSM 244 / SL1) (Ectothiorhodospira halophila (strain DSM 244 / SL1)).